Consider the following 706-residue polypeptide: Serotransferrin (706 aa).

An N-terminal signal peptide occupies residues 1-19 (MRLAIRALLACAVLGLCLA). Transferrin-like domains are found at residues 23 to 349 (VRWC…NLRE) and 363 to 691 (VKWC…NLRQ). 2 disulfides stabilise this stretch: Cys-26-Cys-64 and Cys-36-Cys-55. Arg-40 carries the post-translational modification Dimethylated arginine. Residues Asp-79 and Tyr-111 each contribute to the Fe(3+) site. Cystine bridges form between Cys-134–Cys-215, Cys-174–Cys-190, Cys-177–Cys-198, Cys-187–Cys-200, and Cys-248–Cys-262. Hydrogencarbonate is bound by residues Thr-136, Arg-140, Ala-142, and Gly-143. Residue Tyr-209 coordinates Fe(3+). Position 270 (His-270) interacts with Fe(3+). 11 disulfide bridges follow: Cys-360/Cys-623, Cys-366/Cys-398, Cys-376/Cys-389, Cys-423/Cys-701, Cys-441/Cys-664, Cys-474/Cys-550, Cys-498/Cys-692, Cys-508/Cys-522, Cys-519/Cys-533, Cys-590/Cys-604, and Cys-642/Cys-647. Residue Ser-391 is modified to Phosphoserine. Positions 413 and 449 each coordinate Fe(3+). Thr-476, Arg-480, Ala-482, and Gly-483 together coordinate hydrogencarbonate. N-linked (GlcNAc...) asparagine glycosylation occurs at Asn-515. A Fe(3+)-binding site is contributed by Tyr-544. Residue His-612 participates in Fe(3+) binding. Residue Ser-693 is modified to Phosphoserine.

Belongs to the transferrin family. As to quaternary structure, monomer. Part of a complex composed of SLC40A1/ferroportin, TF/transferrin and HEPH/hephaestin that transfers iron from cells to transferrin. As to expression, expressed by the liver and secreted in plasma.

The protein resides in the secreted. Functionally, transferrins are iron binding transport proteins which can bind two Fe(3+) ions in association with the binding of an anion, usually bicarbonate. It is responsible for the transport of iron from sites of absorption and heme degradation to those of storage and utilization. Serum transferrin may also have a further role in stimulating cell proliferation. This Equus caballus (Horse) protein is Serotransferrin (TF).